The chain runs to 278 residues: Ribosomal RNA small subunit methyltransferase A (278 aa).

S-adenosyl-L-methionine is bound by residues N28, L30, G55, E77, D103, and N122.

This sequence belongs to the class I-like SAM-binding methyltransferase superfamily. rRNA adenine N(6)-methyltransferase family. RsmA subfamily.

Its subcellular location is the cytoplasm. It carries out the reaction adenosine(1518)/adenosine(1519) in 16S rRNA + 4 S-adenosyl-L-methionine = N(6)-dimethyladenosine(1518)/N(6)-dimethyladenosine(1519) in 16S rRNA + 4 S-adenosyl-L-homocysteine + 4 H(+). Functionally, specifically dimethylates two adjacent adenosines (A1518 and A1519) in the loop of a conserved hairpin near the 3'-end of 16S rRNA in the 30S particle. May play a critical role in biogenesis of 30S subunits. The protein is Ribosomal RNA small subunit methyltransferase A of Cereibacter sphaeroides (strain ATCC 17029 / ATH 2.4.9) (Rhodobacter sphaeroides).